A 200-amino-acid chain; its full sequence is MSGFKQHTGLVVPLDAANVDTDAIIPKQFLQKVSRLGFGKHLFHDWRFLDDVGEQPNPEFVMNAPRYQGASILLARENFGCGSSREHAPWALADYGIKAMIAPSFADIFYGNSINNQMVPVRLTEQEVDEIFQFVEANEGAEVEVDLEANVVRANGKEYGFEIDSFRRHCLLNGLDNIGLTLQHEDKIAEYEANIPSFLS.

The protein belongs to the LeuD family. LeuD type 1 subfamily. As to quaternary structure, heterodimer of LeuC and LeuD.

It carries out the reaction (2R,3S)-3-isopropylmalate = (2S)-2-isopropylmalate. Its pathway is amino-acid biosynthesis; L-leucine biosynthesis; L-leucine from 3-methyl-2-oxobutanoate: step 2/4. In terms of biological role, catalyzes the isomerization between 2-isopropylmalate and 3-isopropylmalate, via the formation of 2-isopropylmaleate. The chain is 3-isopropylmalate dehydratase small subunit from Vibrio campbellii (strain ATCC BAA-1116).